The following is a 110-amino-acid chain: Phosphoribosyl-ATP pyrophosphatase (110 aa).

The protein belongs to the PRA-PH family.

The protein localises to the cytoplasm. It carries out the reaction 1-(5-phospho-beta-D-ribosyl)-ATP + H2O = 1-(5-phospho-beta-D-ribosyl)-5'-AMP + diphosphate + H(+). The protein operates within amino-acid biosynthesis; L-histidine biosynthesis; L-histidine from 5-phospho-alpha-D-ribose 1-diphosphate: step 2/9. The chain is Phosphoribosyl-ATP pyrophosphatase from Pseudomonas syringae pv. tomato (strain ATCC BAA-871 / DC3000).